The chain runs to 325 residues: Putative S-adenosyl-L-methionine-dependent methyltransferase MT0917 (325 aa).

Residues aspartate 126 and aspartate 155–leucine 156 each bind S-adenosyl-L-methionine.

The protein belongs to the UPF0677 family.

In terms of biological role, exhibits S-adenosyl-L-methionine-dependent methyltransferase activity. The polypeptide is Putative S-adenosyl-L-methionine-dependent methyltransferase MT0917 (Mycobacterium tuberculosis (strain CDC 1551 / Oshkosh)).